The sequence spans 94 residues: Acylphosphatase (94 aa).

The Acylphosphatase-like domain occupies 8 to 94; it reads TVHVIVKGKV…EKRYKHFAQL (87 aa). Active-site residues include arginine 23 and asparagine 41.

It belongs to the acylphosphatase family.

The catalysed reaction is an acyl phosphate + H2O = a carboxylate + phosphate + H(+). The polypeptide is Acylphosphatase (acyP) (Bordetella parapertussis (strain 12822 / ATCC BAA-587 / NCTC 13253)).